The chain runs to 177 residues: Large ribosomal subunit protein uL6 (177 aa).

This sequence belongs to the universal ribosomal protein uL6 family. As to quaternary structure, part of the 50S ribosomal subunit.

This protein binds to the 23S rRNA, and is important in its secondary structure. It is located near the subunit interface in the base of the L7/L12 stalk, and near the tRNA binding site of the peptidyltransferase center. The chain is Large ribosomal subunit protein uL6 from Rubrobacter xylanophilus (strain DSM 9941 / JCM 11954 / NBRC 16129 / PRD-1).